The following is a 268-amino-acid chain: 4-hydroxy-tetrahydrodipicolinate reductase (268 aa).

Residues 10 to 15 (GASGRM) and aspartate 36 contribute to the NAD(+) site. Residue arginine 37 coordinates NADP(+). NAD(+)-binding positions include 99–101 (GTT) and 123–126 (SANM). Histidine 156 serves as the catalytic Proton donor/acceptor. Histidine 157 contributes to the (S)-2,3,4,5-tetrahydrodipicolinate binding site. Lysine 160 acts as the Proton donor in catalysis. (S)-2,3,4,5-tetrahydrodipicolinate is bound at residue 166–167 (GT).

Belongs to the DapB family.

The protein resides in the cytoplasm. It carries out the reaction (S)-2,3,4,5-tetrahydrodipicolinate + NAD(+) + H2O = (2S,4S)-4-hydroxy-2,3,4,5-tetrahydrodipicolinate + NADH + H(+). The enzyme catalyses (S)-2,3,4,5-tetrahydrodipicolinate + NADP(+) + H2O = (2S,4S)-4-hydroxy-2,3,4,5-tetrahydrodipicolinate + NADPH + H(+). It functions in the pathway amino-acid biosynthesis; L-lysine biosynthesis via DAP pathway; (S)-tetrahydrodipicolinate from L-aspartate: step 4/4. Its function is as follows. Catalyzes the conversion of 4-hydroxy-tetrahydrodipicolinate (HTPA) to tetrahydrodipicolinate. The sequence is that of 4-hydroxy-tetrahydrodipicolinate reductase from Burkholderia thailandensis (strain ATCC 700388 / DSM 13276 / CCUG 48851 / CIP 106301 / E264).